The sequence spans 291 residues: Pituitary-specific positive transcription factor 1 (291 aa).

The 9aaTAD motif lies at 5–13; the sequence is AFTSADTFI. Residues 124 to 198 enclose the POU-specific domain; sequence MDSPEIRELE…ILSKWLEEAE (75 aa). The segment at residues 214 to 273 is a DNA-binding region (homeobox); that stretch reads KRKRRTTISIAAKDALERHFGEQNKPSSQEIMRMAEELNLEKEVVRVWFCNRRQREKRVK.

The protein belongs to the POU transcription factor family. Class-1 subfamily. Interacts with PITX1. Interacts with LHX3. Interacts with ELK1.

It is found in the nucleus. Functionally, transcription factor involved in the specification of the lactotrope, somatotrope, and thyrotrope phenotypes in the developing anterior pituitary. Specifically binds to the consensus sequence 5'-TAAAT-3'. Activates growth hormone and prolactin genes. In Homo sapiens (Human), this protein is Pituitary-specific positive transcription factor 1 (POU1F1).